A 385-amino-acid chain; its full sequence is Polyketide synthase 2 (385 aa).

C157 is a catalytic residue.

This sequence belongs to the thiolase-like superfamily. Chalcone/stilbene synthases family. Expressed in leaves and glandular trichomes.

It localises to the cytoplasm. Its function is as follows. Polyketide synthase responsible for the biosynthesis of secondary metabolites. The sequence is that of Polyketide synthase 2 (PKSG2) from Cannabis sativa (Hemp).